Consider the following 243-residue polypeptide: Thiamin pyrophosphokinase 1 (243 aa).

This sequence belongs to the thiamine pyrophosphokinase family.

The enzyme catalyses thiamine + ATP = thiamine diphosphate + AMP + H(+). It functions in the pathway cofactor biosynthesis; thiamine diphosphate biosynthesis; thiamine diphosphate from thiamine: step 1/1. In terms of biological role, catalyzes the phosphorylation of thiamine to thiamine pyrophosphate. Functions cell non-autonomously. This Caenorhabditis elegans protein is Thiamin pyrophosphokinase 1.